The sequence spans 156 residues: ATP synthase subunit b (156 aa).

The helical transmembrane segment at 7–27 (LIGQLIAFAIFVWFCMKYVWP) threads the bilayer.

It belongs to the ATPase B chain family. As to quaternary structure, F-type ATPases have 2 components, F(1) - the catalytic core - and F(0) - the membrane proton channel. F(1) has five subunits: alpha(3), beta(3), gamma(1), delta(1), epsilon(1). F(0) has three main subunits: a(1), b(2) and c(10-14). The alpha and beta chains form an alternating ring which encloses part of the gamma chain. F(1) is attached to F(0) by a central stalk formed by the gamma and epsilon chains, while a peripheral stalk is formed by the delta and b chains.

It localises to the cell inner membrane. Functionally, f(1)F(0) ATP synthase produces ATP from ADP in the presence of a proton or sodium gradient. F-type ATPases consist of two structural domains, F(1) containing the extramembraneous catalytic core and F(0) containing the membrane proton channel, linked together by a central stalk and a peripheral stalk. During catalysis, ATP synthesis in the catalytic domain of F(1) is coupled via a rotary mechanism of the central stalk subunits to proton translocation. Component of the F(0) channel, it forms part of the peripheral stalk, linking F(1) to F(0). The sequence is that of ATP synthase subunit b from Histophilus somni (strain 129Pt) (Haemophilus somnus).